A 186-amino-acid polypeptide reads, in one-letter code: Putative 5'(3')-deoxyribonucleotidase (186 aa).

Asp-6 (nucleophile) is an active-site residue. Mg(2+) is bound by residues Asp-6, Asp-8, and Asp-137. Asp-8 serves as the catalytic Proton donor.

The protein belongs to the 5'(3')-deoxyribonucleotidase family. Requires Mg(2+) as cofactor.

Its function is as follows. Dephosphorylates the 5' and 2'(3')-phosphates of deoxyribonucleotides. In Bordetella pertussis (strain Tohama I / ATCC BAA-589 / NCTC 13251), this protein is Putative 5'(3')-deoxyribonucleotidase.